A 257-amino-acid chain; its full sequence is Zinc import ATP-binding protein ZnuC (257 aa).

In terms of domain architecture, ABC transporter spans 6–221 (IRLEQVGVSF…PAFVELFGQN (216 aa)). ATP is bound at residue 38–45 (GPNGAGKT).

This sequence belongs to the ABC transporter superfamily. Zinc importer (TC 3.A.1.15.5) family. The complex is composed of two ATP-binding proteins (ZnuC), two transmembrane proteins (ZnuB) and a solute-binding protein (ZnuA).

The protein resides in the cell inner membrane. The catalysed reaction is Zn(2+)(out) + ATP(in) + H2O(in) = Zn(2+)(in) + ADP(in) + phosphate(in) + H(+)(in). Its function is as follows. Part of the ABC transporter complex ZnuABC involved in zinc import. Responsible for energy coupling to the transport system. In Pseudomonas entomophila (strain L48), this protein is Zinc import ATP-binding protein ZnuC.